The primary structure comprises 453 residues: AP-4 complex subunit mu-1 (453 aa).

One can recognise an MHD domain in the interval 184 to 452 (KNEVFLDVVE…LSHSNAYVIR (269 aa)). The disordered stretch occupies residues 383–403 (PGLQGPPSRGPSPSAPPLGLG).

This sequence belongs to the adaptor complexes medium subunit family. Adaptor protein complex 4 (AP-4) is a heterotetramer composed of two large adaptins (epsilon-type subunit AP4E1 and beta-type subunit AP4B1), a medium adaptin (mu-type subunit AP4M1) and a small adaptin (sigma-type AP4S1). Interacts with tyrosine-based sorting signals on the cytoplasmic tail of cargo proteins such as APP, ATG9A, LAMP2 and NAGPA. Interacts with the C-terminal domain of GRID2. Interacts with GRIA1 and GRIA2; the interaction is indirect via CACNG3. Interacts with CACNG3; CACNG3 associates GRIA1 and GRIA2 with the adaptor protein complex 4 (AP-4) to target them to the somatodendritic compartment of neurons. Interacts with HOOK1 and HOOK2; the interactions are direct, mediate the interaction between FTS-Hook-FHIP (FHF) complex and AP-4 and the perinuclear distribution of AP-4. In terms of tissue distribution, high levels in the olfactory bulb, the cerebral cortex, the granule and Purkinje cell layers of the cerebellar cortex and the CA3 region of the hippocampus. Low levels found in molecular layer of cerebellum.

Its subcellular location is the golgi apparatus. It localises to the trans-Golgi network membrane. The protein localises to the early endosome. Component of the adaptor protein complex 4 (AP-4). Adaptor protein complexes are vesicle coat components involved both in vesicle formation and cargo selection. They control the vesicular transport of proteins in different trafficking pathways. AP-4 forms a non clathrin-associated coat on vesicles departing the trans-Golgi network (TGN) and may be involved in the targeting of proteins from the trans-Golgi network (TGN) to the endosomal-lysosomal system. It is also involved in protein sorting to the basolateral membrane in epithelial cells and the proper asymmetric localization of somatodendritic proteins in neurons. Within AP-4, the mu-type subunit AP4M1 is directly involved in the recognition and binding of tyrosine-based sorting signals found in the cytoplasmic part of cargos. The adaptor protein complex 4 (AP-4) may also recognize other types of sorting signal. The sequence is that of AP-4 complex subunit mu-1 from Rattus norvegicus (Rat).